The following is a 332-amino-acid chain: NADH-quinone oxidoreductase subunit H (332 aa).

The next 8 helical transmembrane spans lie at 11–31 (TYKI…IVWL), 77–97 (VIFI…WAVI), 110–130 (VGVL…IMGG), 156–176 (IGVI…NDII), 182–202 (LWFI…ALAE), 240–260 (NILL…LSPI), 268–288 (IPGA…FALV), and 307–327 (IFLP…FYFN).

It belongs to the complex I subunit 1 family. As to quaternary structure, NDH-1 is composed of 14 different subunits. Subunits NuoA, H, J, K, L, M, N constitute the membrane sector of the complex.

It is found in the cell inner membrane. The enzyme catalyses a quinone + NADH + 5 H(+)(in) = a quinol + NAD(+) + 4 H(+)(out). In terms of biological role, NDH-1 shuttles electrons from NADH, via FMN and iron-sulfur (Fe-S) centers, to quinones in the respiratory chain. The immediate electron acceptor for the enzyme in this species is believed to be ubiquinone. Couples the redox reaction to proton translocation (for every two electrons transferred, four hydrogen ions are translocated across the cytoplasmic membrane), and thus conserves the redox energy in a proton gradient. This subunit may bind ubiquinone. The protein is NADH-quinone oxidoreductase subunit H of Pelagibacter ubique (strain HTCC1062).